A 319-amino-acid polypeptide reads, in one-letter code: Glucokinase (319 aa).

8-13 is a binding site for ATP; sequence GDIGGT.

Belongs to the bacterial glucokinase family.

The protein resides in the cytoplasm. It carries out the reaction D-glucose + ATP = D-glucose 6-phosphate + ADP + H(+). This chain is Glucokinase, found in Chromohalobacter salexigens (strain ATCC BAA-138 / DSM 3043 / CIP 106854 / NCIMB 13768 / 1H11).